A 153-amino-acid chain; its full sequence is Large ribosomal subunit protein uL22 (153 aa).

The tract at residues 128 to 153 is disordered; sequence ADRRARRAAAKPAASASPAANEGVPA. Residues 137–147 are compositionally biased toward low complexity; that stretch reads AKPAASASPAA.

This sequence belongs to the universal ribosomal protein uL22 family. Part of the 50S ribosomal subunit.

Functionally, this protein binds specifically to 23S rRNA; its binding is stimulated by other ribosomal proteins, e.g. L4, L17, and L20. It is important during the early stages of 50S assembly. It makes multiple contacts with different domains of the 23S rRNA in the assembled 50S subunit and ribosome. The globular domain of the protein is located near the polypeptide exit tunnel on the outside of the subunit, while an extended beta-hairpin is found that lines the wall of the exit tunnel in the center of the 70S ribosome. This chain is Large ribosomal subunit protein uL22, found in Acidiphilium cryptum (strain JF-5).